We begin with the raw amino-acid sequence, 430 residues long: Adenylosuccinate synthetase (430 aa).

GTP contacts are provided by residues 12–18 (GDEGKGK) and 40–42 (GHT). Catalysis depends on Asp-13, which acts as the Proton acceptor. Asp-13 and Gly-40 together coordinate Mg(2+). Residues 13–16 (DEGK), 38–41 (NAGH), Thr-128, Arg-142, Gln-223, Thr-238, and Arg-302 each bind IMP. His-41 (proton donor) is an active-site residue. A substrate-binding site is contributed by 298–304 (TTTGRPR). GTP-binding positions include Arg-304, 330 to 332 (SID), and 412 to 414 (SVG).

Belongs to the adenylosuccinate synthetase family. Homodimer. Mg(2+) is required as a cofactor.

The protein localises to the cytoplasm. It carries out the reaction IMP + L-aspartate + GTP = N(6)-(1,2-dicarboxyethyl)-AMP + GDP + phosphate + 2 H(+). Its pathway is purine metabolism; AMP biosynthesis via de novo pathway; AMP from IMP: step 1/2. Its function is as follows. Plays an important role in the de novo pathway of purine nucleotide biosynthesis. Catalyzes the first committed step in the biosynthesis of AMP from IMP. In Streptococcus pyogenes serotype M6 (strain ATCC BAA-946 / MGAS10394), this protein is Adenylosuccinate synthetase.